We begin with the raw amino-acid sequence, 994 residues long: Glycine dehydrogenase (decarboxylating), mitochondrial (994 aa).

Residues 1 to 21 (MLKLLRNNGINKLKSNLIRNY) constitute a mitochondrion transit peptide. K742 is subject to N6-(pyridoxal phosphate)lysine.

This sequence belongs to the GcvP family. In terms of assembly, homodimer. The glycine cleavage system is composed of four proteins: P, T, L and H. Requires pyridoxal 5'-phosphate as cofactor.

The protein localises to the mitochondrion. It carries out the reaction N(6)-[(R)-lipoyl]-L-lysyl-[glycine-cleavage complex H protein] + glycine + H(+) = N(6)-[(R)-S(8)-aminomethyldihydrolipoyl]-L-lysyl-[glycine-cleavage complex H protein] + CO2. In terms of biological role, the glycine cleavage system catalyzes the degradation of glycine. The P protein binds the alpha-amino group of glycine through its pyridoxal phosphate cofactor; CO(2) is released and the remaining methylamine moiety is then transferred to the lipoamide cofactor of the H protein. The sequence is that of Glycine dehydrogenase (decarboxylating), mitochondrial (gcvP) from Dictyostelium discoideum (Social amoeba).